We begin with the raw amino-acid sequence, 102 residues long: ATP-dependent Clp protease adapter protein ClpS (102 aa).

Belongs to the ClpS family. As to quaternary structure, binds to the N-terminal domain of the chaperone ClpA.

In terms of biological role, involved in the modulation of the specificity of the ClpAP-mediated ATP-dependent protein degradation. The sequence is that of ATP-dependent Clp protease adapter protein ClpS from Shewanella sp. (strain ANA-3).